The chain runs to 183 residues: UPF0316 protein GTNG_0803 (183 aa).

3 consecutive transmembrane segments (helical) span residues 5–25 (IVLV…RTIF), 33–53 (LAAF…SIVF), and 59–79 (YIVM…LEDI).

Belongs to the UPF0316 family.

Its subcellular location is the cell membrane. This chain is UPF0316 protein GTNG_0803, found in Geobacillus thermodenitrificans (strain NG80-2).